A 528-amino-acid chain; its full sequence is Linear primary-alkylsulfatase (528 aa).

Zn(2+)-binding residues include His-42, His-44, Asp-46, His-47, Glu-151, and Glu-170. Residues 179–184 (NVHTLR) and Arg-189 contribute to the sulfate site. His-213 is a Zn(2+) binding site. Tyr-275 lines the sulfate pocket.

Belongs to the metallo-beta-lactamase superfamily. Type III sulfatase family. Zn(2+) serves as cofactor.

The catalysed reaction is a primary linear alkyl sulfate ester + H2O = a primary alcohol + sulfate + H(+). Its function is as follows. Alkylsulfatase that cleaves the widely used detergent sodium dodecyl sulfate (SDS), which allows the bacterium to use SDS as a sole carbon or sulfur source. This chain is Linear primary-alkylsulfatase, found in Pseudomonas sp. (strain ATCC 19151).